A 941-amino-acid polypeptide reads, in one-letter code: Bifunctional glutamine synthetase adenylyltransferase/adenylyl-removing enzyme (941 aa).

The adenylyl removase stretch occupies residues 1-437; it reads MPMPTVSMSP…AAEFAELLAP (437 aa). The interval 444–941 is adenylyl transferase; the sequence is PDALADYWRA…FPLGKDETAL (498 aa).

It belongs to the GlnE family. The cofactor is Mg(2+).

It carries out the reaction [glutamine synthetase]-O(4)-(5'-adenylyl)-L-tyrosine + phosphate = [glutamine synthetase]-L-tyrosine + ADP. It catalyses the reaction [glutamine synthetase]-L-tyrosine + ATP = [glutamine synthetase]-O(4)-(5'-adenylyl)-L-tyrosine + diphosphate. Involved in the regulation of glutamine synthetase GlnA, a key enzyme in the process to assimilate ammonia. When cellular nitrogen levels are high, the C-terminal adenylyl transferase (AT) inactivates GlnA by covalent transfer of an adenylyl group from ATP to specific tyrosine residue of GlnA, thus reducing its activity. Conversely, when nitrogen levels are low, the N-terminal adenylyl removase (AR) activates GlnA by removing the adenylyl group by phosphorolysis, increasing its activity. The regulatory region of GlnE binds the signal transduction protein PII (GlnB) which indicates the nitrogen status of the cell. This is Bifunctional glutamine synthetase adenylyltransferase/adenylyl-removing enzyme from Xanthomonas axonopodis pv. citri (strain 306).